The following is a 615-amino-acid chain: Matrix metalloproteinase-25 (615 aa).

Residues 1 to 162 constitute a propeptide that is removed on maturation; sequence MCFPGSQISP…AAGLVRRRRR (162 aa). Residues 53-73 traverse the membrane as a helical segment; sequence ILRLPAFGLPLLALLLVPLLP. The short motif at 143–150 is the Cysteine switch element; it reads PRCSLPDV. Residues Cys145 and His287 each coordinate Zn(2+). Residue Glu288 is part of the active site. 2 residues coordinate Zn(2+): His291 and His297. Positions 336–366 are disordered; sequence VSQNPNARPTRKPLVPPPQPPAMPPDSPATP. Over residues 349–366 the composition is skewed to pro residues; sequence LVPPPQPPAMPPDSPATP. Hemopexin repeat units lie at residues 368–417, 421–466, 467–515, and 516–562; these read PDRC…WEGL, VKVI…GLPP, GEDV…DGAP, and FAPD…WLDC. Cys371 and Cys562 are oxidised to a cystine. The segment at 547–582 is disordered; the sequence is AESDSPQPIGPKWLDCPAPNSDPRVTSPPKTTSKTR. The GPI-anchor amidated alanine moiety is linked to residue Ala593. A propeptide spans 594–615 (removed in mature form); that stretch reads SEQLSPLLLPLLPLVAGEVFSY.

This sequence belongs to the peptidase M10A family. Zn(2+) is required as a cofactor. Ca(2+) serves as cofactor. In terms of processing, the precursor is cleaved by a furin endopeptidase.

It is found in the cell membrane. Its function is as follows. May activate progelatinase A. This is Matrix metalloproteinase-25 (Mmp25) from Mus musculus (Mouse).